A 207-amino-acid polypeptide reads, in one-letter code: MRAIRMLLVSALALGTVTAYAGEQDVQRLTQLLEKSQTIEANFSQLTLGADGTSLQETSGKMTVKRPGLFYWHTDAPQEQVVVSDGKNVTLWDPDLEQATIKKLDVRLNQTPALLLSGDVSKISQSFDIASKEQGEVMDFTLKPKTKDTLFDSLRVSFRKGLINDMQLIDSVGQRTNILFNGVKANQAVPDSKFTFDIPKGADVIKE.

Positions 1–21 (MRAIRMLLVSALALGTVTAYA) are cleaved as a signal peptide.

Belongs to the LolA family. In terms of assembly, monomer.

It localises to the periplasm. Participates in the translocation of lipoproteins from the inner membrane to the outer membrane. Only forms a complex with a lipoprotein if the residue after the N-terminal Cys is not an aspartate (The Asp acts as a targeting signal to indicate that the lipoprotein should stay in the inner membrane). This chain is Outer-membrane lipoprotein carrier protein, found in Pseudomonas putida (strain GB-1).